Reading from the N-terminus, the 20-residue chain is Hemocyanin subunit Ia (20 aa).

Residues Ala-1–Val-20 are disordered.

Belongs to the tyrosinase family. Hemocyanin subfamily. In terms of assembly, composed of 3 major subunits (IB, II and III) and 1 minor subunit (IA) which form homohexamers and heterohexamers. May also form larger structures. Hemolymph.

It localises to the secreted. It is found in the extracellular space. In terms of biological role, hemocyanins are copper-containing oxygen carriers occurring freely dissolved in the hemolymph of many mollusks and arthropods. The sequence is that of Hemocyanin subunit Ia from Panulirus japonicus (Japanese spiny lobster).